Consider the following 811-residue polypeptide: Probable potassium transporter 16 (811 aa).

Residues M1 to R66 lie on the Cytoplasmic side of the membrane. A helical membrane pass occupies residues L67 to Y87. Over Q88–D100 the chain is Extracellular. Residues I101–V121 traverse the membrane as a helical segment. Topologically, residues F122–K190 are cytoplasmic. Residues I191–N211 traverse the membrane as a helical segment. At P212–P228 the chain is on the extracellular side. The chain crosses the membrane as a helical span at residues H229–V249. Over Q250–K256 the chain is Cytoplasmic. The chain crosses the membrane as a helical span at residues I257 to I277. Residues Y278–Q310 are Extracellular-facing. A helical transmembrane segment spans residues L311 to F331. At S332–Q337 the chain is on the cytoplasmic side. Residues L338–Y358 form a helical membrane-spanning segment. Over L359–P379 the chain is Extracellular. A helical membrane pass occupies residues L380–V400. The Cytoplasmic segment spans residues S401 to N438. A helical membrane pass occupies residues F439–V459. Residues K460–E463 lie on the Extracellular side of the membrane. Residues I464 to V484 form a helical membrane-spanning segment. At W485–N488 the chain is on the cytoplasmic side. Residues I489–A509 traverse the membrane as a helical segment. The Extracellular segment spans residues V510–Y519. A helical transmembrane segment spans residues M520 to V540. The Cytoplasmic portion of the chain corresponds to K541–I811.

This sequence belongs to the HAK/KUP transporter (TC 2.A.72.3) family.

It is found in the membrane. Its function is as follows. High-affinity potassium transporter. This is Probable potassium transporter 16 (HAK16) from Oryza sativa subsp. japonica (Rice).